The sequence spans 86 residues: Small ribosomal subunit protein uS17 (86 aa).

The protein belongs to the universal ribosomal protein uS17 family. As to quaternary structure, part of the 30S ribosomal subunit.

Functionally, one of the primary rRNA binding proteins, it binds specifically to the 5'-end of 16S ribosomal RNA. The sequence is that of Small ribosomal subunit protein uS17 from Marinomonas sp. (strain MWYL1).